Reading from the N-terminus, the 280-residue chain is Ribosomal RNA small subunit methyltransferase A (280 aa).

6 residues coordinate S-adenosyl-L-methionine: asparagine 27, leucine 29, glycine 54, glutamate 76, aspartate 102, and asparagine 122.

Belongs to the class I-like SAM-binding methyltransferase superfamily. rRNA adenine N(6)-methyltransferase family. RsmA subfamily.

It is found in the cytoplasm. The enzyme catalyses adenosine(1518)/adenosine(1519) in 16S rRNA + 4 S-adenosyl-L-methionine = N(6)-dimethyladenosine(1518)/N(6)-dimethyladenosine(1519) in 16S rRNA + 4 S-adenosyl-L-homocysteine + 4 H(+). Functionally, specifically dimethylates two adjacent adenosines (A1518 and A1519) in the loop of a conserved hairpin near the 3'-end of 16S rRNA in the 30S particle. May play a critical role in biogenesis of 30S subunits. The sequence is that of Ribosomal RNA small subunit methyltransferase A from Oleidesulfovibrio alaskensis (strain ATCC BAA-1058 / DSM 17464 / G20) (Desulfovibrio alaskensis).